The following is a 349-amino-acid chain: Phosphate acyltransferase (349 aa).

Belongs to the PlsX family. As to quaternary structure, homodimer. Probably interacts with PlsY.

The protein localises to the cytoplasm. It catalyses the reaction a fatty acyl-[ACP] + phosphate = an acyl phosphate + holo-[ACP]. Its pathway is lipid metabolism; phospholipid metabolism. Functionally, catalyzes the reversible formation of acyl-phosphate (acyl-PO(4)) from acyl-[acyl-carrier-protein] (acyl-ACP). This enzyme utilizes acyl-ACP as fatty acyl donor, but not acyl-CoA. The chain is Phosphate acyltransferase from Rhodopseudomonas palustris (strain BisA53).